The following is a 70-amino-acid chain: Protein SlyX homolog (70 aa).

This sequence belongs to the SlyX family.

The polypeptide is Protein SlyX homolog (Shewanella denitrificans (strain OS217 / ATCC BAA-1090 / DSM 15013)).